The sequence spans 51 residues: uncharacterized protein (51 aa).

The protein to E.coli YdfA.

This is an uncharacterized protein from Escherichia coli O157:H7.